Here is a 363-residue protein sequence, read N- to C-terminus: Protein CPn_1058/CP_0792/CPj1058/CpB1100 (363 aa).

The first 27 residues, 1–27 (MKLYQTLRGIVLVSTGCIFLGMHGGYA), serve as a signal peptide directing secretion.

It belongs to the chlamydial CPn_1058/CT_355/TC_0634 family.

The polypeptide is Protein CPn_1058/CP_0792/CPj1058/CpB1100 (Chlamydia pneumoniae (Chlamydophila pneumoniae)).